The sequence spans 124 residues: S-adenosylmethionine decarboxylase proenzyme (124 aa).

Ser63 functions as the Schiff-base intermediate with substrate; via pyruvic acid in the catalytic mechanism. At Ser63 the chain carries Pyruvic acid (Ser); by autocatalysis. His68 (proton acceptor; for processing activity) is an active-site residue. Cys83 serves as the catalytic Proton donor; for catalytic activity.

This sequence belongs to the prokaryotic AdoMetDC family. Type 1 subfamily. In terms of assembly, heterotetramer of two alpha and two beta chains arranged as a dimer of alpha/beta heterodimers. Pyruvate is required as a cofactor. Post-translationally, is synthesized initially as an inactive proenzyme. Formation of the active enzyme involves a self-maturation process in which the active site pyruvoyl group is generated from an internal serine residue via an autocatalytic post-translational modification. Two non-identical subunits are generated from the proenzyme in this reaction, and the pyruvate is formed at the N-terminus of the alpha chain, which is derived from the carboxyl end of the proenzyme. The post-translation cleavage follows an unusual pathway, termed non-hydrolytic serinolysis, in which the side chain hydroxyl group of the serine supplies its oxygen atom to form the C-terminus of the beta chain, while the remainder of the serine residue undergoes an oxidative deamination to produce ammonia and the pyruvoyl group blocking the N-terminus of the alpha chain.

It carries out the reaction S-adenosyl-L-methionine + H(+) = S-adenosyl 3-(methylsulfanyl)propylamine + CO2. Its pathway is amine and polyamine biosynthesis; S-adenosylmethioninamine biosynthesis; S-adenosylmethioninamine from S-adenosyl-L-methionine: step 1/1. Functionally, catalyzes the decarboxylation of S-adenosylmethionine to S-adenosylmethioninamine (dcAdoMet), the propylamine donor required for the synthesis of the polyamines spermine and spermidine from the diamine putrescine. The polypeptide is S-adenosylmethionine decarboxylase proenzyme (Thermoanaerobacter pseudethanolicus (strain ATCC 33223 / 39E) (Clostridium thermohydrosulfuricum)).